Consider the following 1399-residue polypeptide: Dicer-like protein 2 (1399 aa).

The Helicase ATP-binding domain occupies 18–194; sequence MVEESMQSNI…EDLQQIERNL (177 aa). Position 31–38 (31–38) interacts with ATP; that stretch reads MDTGSGKT. The DEAH box signature appears at 139–142; it reads DEAH. Residues 364–549 enclose the Helicase C-terminal domain; sequence KLQLLIKFLV…QSETGHRNFE (186 aa). In terms of domain architecture, Dicer dsRNA-binding fold spans 562-656; sequence ASQHLHHFCS…LPARQEADDE (95 aa). RNase III domains lie at 897–1054 and 1094–1270; these read LPSI…TVGG and LDVL…IDSL. Positions 1133, 1256, and 1259 each coordinate Mg(2+). In terms of domain architecture, DRBM spans 1301-1370; the sequence is HPKERLGHLA…AWKAVGVLES (70 aa).

Belongs to the helicase family. Dicer subfamily. The cofactor is Mg(2+). Mn(2+) is required as a cofactor.

In terms of biological role, dicer-like endonuclease involved in cleaving double-stranded RNA in the RNA interference (RNAi) pathway. Produces 21 to 25 bp dsRNAs (siRNAs) which target the selective destruction of homologous RNAs leading to sequence-specific suppression of gene expression, called post-transcriptional gene silencing (PTGS). Part of a broad host defense response against viral infection and transposons. The chain is Dicer-like protein 2 (DCL2) from Phaeosphaeria nodorum (strain SN15 / ATCC MYA-4574 / FGSC 10173) (Glume blotch fungus).